Here is a 304-residue protein sequence, read N- to C-terminus: Methionyl-tRNA formyltransferase (304 aa).

A (6S)-5,6,7,8-tetrahydrofolate-binding site is contributed by 109 to 112 (SDLP).

Belongs to the Fmt family.

The enzyme catalyses L-methionyl-tRNA(fMet) + (6R)-10-formyltetrahydrofolate = N-formyl-L-methionyl-tRNA(fMet) + (6S)-5,6,7,8-tetrahydrofolate + H(+). Attaches a formyl group to the free amino group of methionyl-tRNA(fMet). The formyl group appears to play a dual role in the initiator identity of N-formylmethionyl-tRNA by promoting its recognition by IF2 and preventing the misappropriation of this tRNA by the elongation apparatus. The polypeptide is Methionyl-tRNA formyltransferase (Rickettsia bellii (strain RML369-C)).